Reading from the N-terminus, the 310-residue chain is 4-diphosphocytidyl-2-C-methyl-D-erythritol kinase (310 aa).

K20 is a catalytic residue. 106–116 (PMGGGLGGGSS) lines the ATP pocket. Residue D148 is part of the active site.

Belongs to the GHMP kinase family. IspE subfamily. As to quaternary structure, homodimer.

The enzyme catalyses 4-CDP-2-C-methyl-D-erythritol + ATP = 4-CDP-2-C-methyl-D-erythritol 2-phosphate + ADP + H(+). The protein operates within isoprenoid biosynthesis; isopentenyl diphosphate biosynthesis via DXP pathway; isopentenyl diphosphate from 1-deoxy-D-xylulose 5-phosphate: step 3/6. In terms of biological role, catalyzes the phosphorylation of the position 2 hydroxy group of 4-diphosphocytidyl-2C-methyl-D-erythritol. The protein is 4-diphosphocytidyl-2-C-methyl-D-erythritol kinase of Yersinia pseudotuberculosis serotype O:3 (strain YPIII).